We begin with the raw amino-acid sequence, 271 residues long: Dioscorin dioA3 (271 aa).

The first 21 residues, 1-21 (MSSSTLLHLLLLSSLLFSCLS), serve as a signal peptide directing secretion. The 235-residue stretch at 28–262 (DEFSYIEGNP…TNFRSVFYFE (235 aa)) folds into the Alpha-carbonic anhydrase domain. The cysteines at positions 53 and 212 are disulfide-linked. His94 (proton acceptor) is an active-site residue. L-ascorbate contacts are provided by residues Asp95, 120–122 (HFH), Gln139, and 208–209 (TA).

It belongs to the alpha-carbonic anhydrase family. As to quaternary structure, monomer. Homodimer. Post-translationally, not glycosylated. Expressed in tuber (at protein level).

It carries out the reaction hydrogencarbonate + H(+) = CO2 + H2O. The catalysed reaction is 2 monodehydro-L-ascorbate radical + NADH + H(+) = 2 L-ascorbate + NAD(+). With respect to regulation, the carbonate dehydratase activity is not substantially changed by the addition of Zn(2+). Its function is as follows. Storage protein of tuber. Involved in protection against oxidative stress. Has carbonate dehydratase, trypsin inhibitor, dehydroascorbate (DHA) reductase and monodehydroascorbate (MDA) reductase activities. Catalyzes the reactions of carbonate dehydratase and DHA reductase independently of zinc and glutathione (GSH). The coupled reaction is capable of recycling a plant antioxidant ascorbate using ubiquitous compounds H(2)O and CO(2). Exhibits antioxidant activity. Able to scavenge 1,1-diphenyl-2-picrylhydrazyl (DPPH) radical. Exhibits immunomodulatory activity. Activates Toll-like receptor 4 signaling pathways by up-regulating the gene expression of pro-inflammatory cytokines, such as tumor necrosis factor alpha, interleukin-1 beta and interleukin-6, and chemokines RANTES and MCP-1, in mouse RAW 264.7 macrophages. Stimulates the phagocytosis of E.coli by the LPS-treated mouse macrophages. The polypeptide is Dioscorin dioA3 (Dioscorea japonica (Japanese yam)).